Consider the following 400-residue polypeptide: Argininosuccinate synthase (400 aa).

Residue 8–16 (AYSGGLDTS) participates in ATP binding. Tyr-87 provides a ligand contact to L-citrulline. ATP is bound at residue Gly-117. Thr-119, Asn-123, and Asp-124 together coordinate L-aspartate. Asn-123 contacts L-citrulline. Residues Arg-127, Ser-175, Glu-260, and Tyr-272 each coordinate L-citrulline.

This sequence belongs to the argininosuccinate synthase family. Type 1 subfamily. In terms of assembly, homotetramer.

It localises to the cytoplasm. It carries out the reaction L-citrulline + L-aspartate + ATP = 2-(N(omega)-L-arginino)succinate + AMP + diphosphate + H(+). It functions in the pathway amino-acid biosynthesis; L-arginine biosynthesis; L-arginine from L-ornithine and carbamoyl phosphate: step 2/3. This Mycolicibacterium gilvum (strain PYR-GCK) (Mycobacterium gilvum (strain PYR-GCK)) protein is Argininosuccinate synthase.